Consider the following 138-residue polypeptide: Large ribosomal subunit protein bL12c (138 aa).

Belongs to the bacterial ribosomal protein bL12 family. In terms of assembly, homodimer. Part of the ribosomal stalk of the 50S ribosomal subunit. Forms a multimeric L10(L12)X complex, where L10 forms an elongated spine to which 2 to 4 L12 dimers bind in a sequential fashion. Binds GTP-bound translation factors.

It localises to the plastid. Its function is as follows. Forms part of the ribosomal stalk which helps the ribosome interact with GTP-bound translation factors. Is thus essential for accurate translation. The chain is Large ribosomal subunit protein bL12c from Euglena longa (Euglenophycean alga).